We begin with the raw amino-acid sequence, 186 residues long: Elongation factor P (186 aa).

Belongs to the elongation factor P family.

The protein localises to the cytoplasm. The protein operates within protein biosynthesis; polypeptide chain elongation. In terms of biological role, involved in peptide bond synthesis. Stimulates efficient translation and peptide-bond synthesis on native or reconstituted 70S ribosomes in vitro. Probably functions indirectly by altering the affinity of the ribosome for aminoacyl-tRNA, thus increasing their reactivity as acceptors for peptidyl transferase. This Streptococcus sanguinis (strain SK36) protein is Elongation factor P.